The following is a 243-amino-acid chain: uncharacterized protein (243 aa).

Positions Met-1–Ala-19 are cleaved as a signal peptide. N-linked (GlcNAc...) asparagine glycosylation is present at Asn-136.

The protein localises to the secreted. This is an uncharacterized protein from Homo sapiens (Human).